We begin with the raw amino-acid sequence, 119 residues long: Ergochrome gene cluster protein CPUR_05426 (119 aa).

It functions in the pathway pigment biosynthesis. Functionally, part of the ergochrome gene cluster responsible for the typical purple-black color of the ergot sclerotia. The ergochrome gene cluster produces several ergot pigments including the yellow ergochrome secalonic acid and its derivatives, as well as the red anthraquinones endocrocin and clavorubin. The pathway begins with the synthesis of atrochrysone thioester by the polyketide synthase (PKS) CPUR_05437. The atrochrysone carboxyl ACP thioesterase CPUR_05436 then breaks the thioester bond and releases the atrochrysone carboxylic acid from CPUR_05437. The atrochrysone carboxylic acid is then converted to atrochrysone which is further transformed into emodin anthrone. The next step is performed by the anthrone oxygenase CPUR_05434 that catalyzes the oxidation of emodinanthrone to emodin. Emodin is further modified to yield monodictyphenone via several steps involving CPUR_05427, CPUR_05428, CPUR_05429 and CPUR_05430. The short chain dehydrogenase/reductase CPUR_05418 then catalyzes the C-5 ketoreduction to give the xanthone skeleton of the monomeric units. Ergochromes formation requires further dimerization steps of different xanthone units, probably catalyzed by the cytochrome P450 monooxygenase CPUR_05419. CPUR_05425, CPUR_05426 and CPUR_05431 are unique to Claviceps, thus it is likely that they are involved in further modification of xanthone units or in their dimerization. The yellow ergochromes and the red anthraquinone pigments endocrocin and clavorubin are products from the same PKS derived precursors and the latter are likely shunt products in the pathway of xanthone biosynthesis. It is proposed that atrochrysone carboxylic acid released from the PKS CPUR_05437 can also be converted to endocrocin anthrone which is further oxidized into endocrocin by CPUR_05435. Endocrocin could be then modified to clavorubin, possibly by CPUR_05423 and CPUR_05431. Clavorubin is the principal anthraquinone metabolite produced by the cluster with a much higher yield compared to endocrocin. The chain is Ergochrome gene cluster protein CPUR_05426 from Claviceps purpurea (strain 20.1) (Ergot fungus).